The sequence spans 354 residues: MSLDKIMNEAISPWMKGDGPDSDIVLSSRIRLARNFKQYQFSTMQNEEEAKQIHELFKKKFINKAVGSFGEFGLLKMNELTPLQRRVLVEKHLISPNLAGTEYGACLLSESEHISVMLNEEDHIRIQCLFSGLQLSEALQSANQIDNWIEKEVEYAFDESLGYITSCPTNVGTGLRASVMIHLPGLVLTKRISRIIQVIQKLGLVVRGIYGEGSEALGNIFQVSNQMTLGKSEEDIIADLKSVIQQIIQQEKMARELIVQNSSIELEDKVYRSYGILANSRLIQSAEAANCLSDVRLGIDLGYIKGISRNILTELMVLTQPGILQQYAGGPLGPEERDYRRATLIRERLSIEKN.

In terms of domain architecture, Phosphagen kinase C-terminal spans 24-254 (IVLSSRIRLA…QQIIQQEKMA (231 aa)). ATP contacts are provided by residues 27 to 31 (SSRIR), His92, Arg125, 176 to 180 (RASVM), and 207 to 212 (RGIYGE). The RDXXRA motif of the pArg binding pocket involved in allosteric regulation signature appears at 337–342 (RDYRRA).

This sequence belongs to the ATP:guanido phosphotransferase family.

The enzyme catalyses L-arginyl-[protein] + ATP = N(omega)-phospho-L-arginyl-[protein] + ADP + H(+). Appears to be allosterically activated by the binding of pArg-containing polypeptides to the pArg-binding pocket localized in the C-terminal domain of McsB. Functionally, catalyzes the specific phosphorylation of arginine residues in a large number of proteins. Is part of the bacterial stress response system. Protein arginine phosphorylation has a physiologically important role and is involved in the regulation of many critical cellular processes, such as protein homeostasis, motility, competence, and stringent and stress responses, by regulating gene expression and protein activity. In Bacillus cereus (strain G9842), this protein is Protein-arginine kinase.